Reading from the N-terminus, the 736-residue chain is Elongation factor 2 (736 aa).

The region spanning 18–234 (TRVRNIGIIA…VIDAYTASDK (217 aa)) is the tr-type G domain. GTP-binding positions include 27 to 34 (AHVDHGKT), 93 to 97 (DTPGH), and 147 to 150 (NKVD). At His603 the chain carries Diphthamide.

The protein belongs to the TRAFAC class translation factor GTPase superfamily. Classic translation factor GTPase family. EF-G/EF-2 subfamily.

It is found in the cytoplasm. Catalyzes the GTP-dependent ribosomal translocation step during translation elongation. During this step, the ribosome changes from the pre-translocational (PRE) to the post-translocational (POST) state as the newly formed A-site-bound peptidyl-tRNA and P-site-bound deacylated tRNA move to the P and E sites, respectively. Catalyzes the coordinated movement of the two tRNA molecules, the mRNA and conformational changes in the ribosome. The sequence is that of Elongation factor 2 (fusA) from Saccharolobus solfataricus (strain ATCC 35092 / DSM 1617 / JCM 11322 / P2) (Sulfolobus solfataricus).